A 425-amino-acid chain; its full sequence is Serine--tRNA ligase (425 aa).

230 to 232 (TAE) provides a ligand contact to L-serine. Residue 261–263 (RSE) participates in ATP binding. L-serine is bound at residue Glu284. 348-351 (EISS) serves as a coordination point for ATP. Position 384 (Ser384) interacts with L-serine.

The protein belongs to the class-II aminoacyl-tRNA synthetase family. Type-1 seryl-tRNA synthetase subfamily. In terms of assembly, homodimer. The tRNA molecule binds across the dimer.

Its subcellular location is the cytoplasm. The catalysed reaction is tRNA(Ser) + L-serine + ATP = L-seryl-tRNA(Ser) + AMP + diphosphate + H(+). It carries out the reaction tRNA(Sec) + L-serine + ATP = L-seryl-tRNA(Sec) + AMP + diphosphate + H(+). It participates in aminoacyl-tRNA biosynthesis; selenocysteinyl-tRNA(Sec) biosynthesis; L-seryl-tRNA(Sec) from L-serine and tRNA(Sec): step 1/1. Functionally, catalyzes the attachment of serine to tRNA(Ser). Is also able to aminoacylate tRNA(Sec) with serine, to form the misacylated tRNA L-seryl-tRNA(Sec), which will be further converted into selenocysteinyl-tRNA(Sec). The sequence is that of Serine--tRNA ligase from Streptococcus equi subsp. zooepidemicus (strain H70).